Reading from the N-terminus, the 190-residue chain is DNA-invertase (190 aa).

The 134-residue stretch at 2–135 (ATIGYIRVST…AGLAAARAQG (134 aa)) folds into the Resolvase/invertase-type recombinase catalytic domain. Catalysis depends on Ser10, which acts as the O-(5'-phospho-DNA)-serine intermediate. The H-T-H motif DNA-binding region spans 162 to 181 (RQQLAIIFGIGVSTLYRYFP).

The protein belongs to the site-specific recombinase resolvase family.

Its function is as follows. A DNA fragment of approximately 900 base pairs, adjacent to the fljB (H2) gene, which specifies the synthesis of phase-2 flagellin, can exist in either orientation with respect to fljB. The orientation of the inversion region controls expression of fljB. The hin gene occupies about two-thirds of the inversion region; it is required for the inversion of the fljB controlling region. The polypeptide is DNA-invertase (hin) (Salmonella abortus-equi).